Here is a 212-residue protein sequence, read N- to C-terminus: Octanoyltransferase (212 aa).

One can recognise a BPL/LPL catalytic domain in the interval 33–212 (GTAPELVWLL…ATFPEVFGAD (180 aa)). Substrate-binding positions include 72–79 (RGGQYTYH), 144–146 (AIG), and 157–159 (GIA). The active-site Acyl-thioester intermediate is the cysteine 175.

It belongs to the LipB family.

It is found in the cytoplasm. It carries out the reaction octanoyl-[ACP] + L-lysyl-[protein] = N(6)-octanoyl-L-lysyl-[protein] + holo-[ACP] + H(+). It participates in protein modification; protein lipoylation via endogenous pathway; protein N(6)-(lipoyl)lysine from octanoyl-[acyl-carrier-protein]: step 1/2. In terms of biological role, catalyzes the transfer of endogenously produced octanoic acid from octanoyl-acyl-carrier-protein onto the lipoyl domains of lipoate-dependent enzymes. Lipoyl-ACP can also act as a substrate although octanoyl-ACP is likely to be the physiological substrate. The sequence is that of Octanoyltransferase from Paramagnetospirillum magneticum (strain ATCC 700264 / AMB-1) (Magnetospirillum magneticum).